The chain runs to 425 residues: Protein translocase subunit SecY (425 aa).

Transmembrane regions (helical) follow at residues 15 to 35, 62 to 82, 113 to 131, 139 to 159, 168 to 188, 201 to 221, 266 to 286, 304 to 324, 364 to 384, and 385 to 405; these read LLSL…VPGI, TVVV…SIIM, LLTL…FYLK, LVLA…VLWL, LGNG…PGFV, IGSW…IVLL, PIIL…LGLL, IIYW…YSTI, LLGA…QAIL, and SLSG…GVIL.

This sequence belongs to the SecY/SEC61-alpha family. Component of the plastid Sec protein translocase complex, which is composed of at least SecY, SecE and SecG.

Its subcellular location is the plastid. It is found in the chloroplast thylakoid membrane. In terms of biological role, the central subunit of the protein translocation channel SecYE. Consists of two halves formed by TMs 1-5 and 6-10. These two domains form a lateral gate at the front which open onto the bilayer between TMs 2 and 7, and are clamped together by SecE at the back. The channel is closed by both a pore ring composed of hydrophobic SecY resides and a short helix (helix 2A) on the extracellular side of the membrane which forms a plug. The chain is Protein translocase subunit SecY from Trieres chinensis (Marine centric diatom).